Consider the following 557-residue polypeptide: Small ribosomal subunit protein bS1 (557 aa).

6 consecutive S1 motif domains span residues 21–87 (GSIV…LSRE), 105–171 (SATV…VSRR), 192–260 (GMEV…LGLK), 277–347 (GTKL…LGLK), 364–434 (GDRV…LGVK), and 451–520 (GAIV…LSIR).

The protein belongs to the bacterial ribosomal protein bS1 family.

Its function is as follows. Binds mRNA; thus facilitating recognition of the initiation point. It is needed to translate mRNA with a short Shine-Dalgarno (SD) purine-rich sequence. The sequence is that of Small ribosomal subunit protein bS1 (rpsA) from Dickeya dadantii (strain 3937) (Erwinia chrysanthemi (strain 3937)).